We begin with the raw amino-acid sequence, 658 residues long: Aminopeptidase P1 (658 aa).

Residues R69 and H436 each coordinate a peptide. The Mn(2+) site is built by D456, D467, and H530. A peptide is bound by residues H530, H539, and E563. Mn(2+)-binding residues include E563 and E577.

This sequence belongs to the peptidase M24B family. In terms of assembly, homodimer. Interacts with N-1-naphthylphthalamic acid (NPA). Interacts with NBCL/BOP2/COCH around the plasma membrane and in the nucleus; this interaction disturbs its regulation of the nuclear transcription factor Y subunit (NF-YA1). Mn(2+) is required as a cofactor. Zn(2+) serves as cofactor. Expressed at similar levels in shoot apical meristems (SAM), root meristems (RM), root apical meristems (RAM), roots and leaves and, to a slightly lesser degree, in root nodules.

Its subcellular location is the nucleus. The protein localises to the cytoplasm. The protein resides in the cell membrane. It is found in the microsome membrane. It carries out the reaction Release of any N-terminal amino acid, including proline, that is linked to proline, even from a dipeptide or tripeptide.. Its function is as follows. Catalyzes the removal of a penultimate prolyl residue from the N-termini of peptides, such as Arg-Pro-Pro. Aminopeptidase that binds to the auxin transport inhibitor N-1-naphthylphthalamic acid (NPA). May play a negative role in the regulation of PIN auxin transport proteins. Involved in the coordination of the symbiotic nodule developmental program; prevents the formation of root nodules by regulating the expression of the nuclear transcription factor Y subunit (NF-YA1), a key nodulin. The sequence is that of Aminopeptidase P1 from Lotus japonicus (Lotus corniculatus var. japonicus).